Reading from the N-terminus, the 652-residue chain is tRNA 5-methylaminomethyl-2-thiouridine biosynthesis bifunctional protein MnmC (652 aa).

The tRNA (mnm(5)s(2)U34)-methyltransferase stretch occupies residues 1–227 (MLSWKNDLTP…KREMLTGKYS (227 aa)). The tract at residues 259–652 (IGAGIAGSTL…ARFLYRRIRK (394 aa)) is FAD-dependent cmnm(5)s(2)U34 oxidoreductase.

The protein in the N-terminal section; belongs to the methyltransferase superfamily. tRNA (mnm(5)s(2)U34)-methyltransferase family. It in the C-terminal section; belongs to the DAO family. It depends on FAD as a cofactor.

Its subcellular location is the cytoplasm. The enzyme catalyses 5-aminomethyl-2-thiouridine(34) in tRNA + S-adenosyl-L-methionine = 5-methylaminomethyl-2-thiouridine(34) in tRNA + S-adenosyl-L-homocysteine + H(+). Catalyzes the last two steps in the biosynthesis of 5-methylaminomethyl-2-thiouridine (mnm(5)s(2)U) at the wobble position (U34) in tRNA. Catalyzes the FAD-dependent demodification of cmnm(5)s(2)U34 to nm(5)s(2)U34, followed by the transfer of a methyl group from S-adenosyl-L-methionine to nm(5)s(2)U34, to form mnm(5)s(2)U34. The protein is tRNA 5-methylaminomethyl-2-thiouridine biosynthesis bifunctional protein MnmC of Leptospira borgpetersenii serovar Hardjo-bovis (strain JB197).